Consider the following 847-residue polypeptide: Alanine--tRNA ligase (847 aa).

4 residues coordinate Zn(2+): His-554, His-558, Cys-656, and His-660.

It belongs to the class-II aminoacyl-tRNA synthetase family. The cofactor is Zn(2+).

The protein localises to the cytoplasm. The catalysed reaction is tRNA(Ala) + L-alanine + ATP = L-alanyl-tRNA(Ala) + AMP + diphosphate. Its function is as follows. Catalyzes the attachment of alanine to tRNA(Ala) in a two-step reaction: alanine is first activated by ATP to form Ala-AMP and then transferred to the acceptor end of tRNA(Ala). Also edits incorrectly charged Ser-tRNA(Ala) and Gly-tRNA(Ala) via its editing domain. The sequence is that of Alanine--tRNA ligase from Helicobacter acinonychis (strain Sheeba).